Here is a 270-residue protein sequence, read N- to C-terminus: Putative carboxymethylenebutenolidase (270 aa).

Active-site residues include Cys147, Asp204, and His236.

The protein belongs to the dienelactone hydrolase family.

The enzyme catalyses 2-(5-oxo-2,5-dihydrofuran-2-ylidene)acetate + H2O = 4-oxohex-2-enedioate + H(+). This is Putative carboxymethylenebutenolidase (ysgA) from Salmonella typhi.